A 558-amino-acid polypeptide reads, in one-letter code: MSQATEFDYIIIGAGSAGNVLATRLTEDSDVSVLLLEAGGPDYRFDFRTQMPAALAYPLQGKRYNWAFETDPEPHMDNRRMECGRGKGLGGSSLINGMCYIRGNALDYDHWAKQPGLEEWDYLSCLPYFKKSETRDIGPNDYHGGDGPVSVTTPKAGNNPLYRTFIEAGKQAGYPETEDVNGYQQEGFGPMDRFVTPKGRRASTARGYLDTAKQRSNLTIETRAVTDVIEFEGKRAVGVRYEQKGQPKQARARREVLLCGGAIASPQILQRSGVGNPEWLKELGIPVVHELPGVGENLQDHLEMYIQYECKEPISLYPALKWYNQPKIGAEWLFKGTGVGASNQFESCGFIRSRDDEEWPNLQYHFLPIAISYNGKSAVQAHGFQAHVGSMRSESRGRIRLTSKDPHAAPSILFNYMAKEKDWEEFRDAIRLTREIIAQPAFDRYRGREISPGPDVQSDEELDNFVKQHAETAYHPCGSCRMGEGDMAVTDAQGRVHGLEGLRVVDASLFPVIPTGNLNAPTIMLAEKIADRIRGREPLPRASVDYYVANGAPAKQAS.

An FAD-binding site is contributed by 8–37 (DYIIIGAGSAGNVLATRLTEDSDVSVLLLE). Histidine 475 (proton acceptor) is an active-site residue.

This sequence belongs to the GMC oxidoreductase family. The cofactor is FAD.

It catalyses the reaction choline + A = betaine aldehyde + AH2. The enzyme catalyses betaine aldehyde + NAD(+) + H2O = glycine betaine + NADH + 2 H(+). Its pathway is amine and polyamine biosynthesis; betaine biosynthesis via choline pathway; betaine aldehyde from choline (cytochrome c reductase route): step 1/1. Involved in the biosynthesis of the osmoprotectant glycine betaine. Catalyzes the oxidation of choline to betaine aldehyde and betaine aldehyde to glycine betaine at the same rate. The chain is Oxygen-dependent choline dehydrogenase from Chromohalobacter salexigens (strain ATCC BAA-138 / DSM 3043 / CIP 106854 / NCIMB 13768 / 1H11).